Consider the following 158-residue polypeptide: Histone H3-like centromeric protein CSE4 (158 aa).

The span at 1-18 (MARISTSSNRPVPTSSAL) shows a compositional bias: polar residues. The tract at residues 1–59 (MARISTSSNRPVPTSSALRRQRERDDGGRSTRAPGHNTGLYGNQPGDPPTIRSTNTTVK) is disordered. The span at 20–29 (RQRERDDGGR) shows a compositional bias: basic and acidic residues. Residues 54-157 (TNTTVKRRYR…IQLARRIRGN (104 aa)) form an H3-like region.

The protein belongs to the histone H3 family. In terms of assembly, component of centromeric nucleosomes, where DNA is wrapped around a histone octamer core. The octamer contains two molecules each of H2A, H2B, CSE4/CENPA and H4 assembled in one CSE4-H4 heterotetramer and two H2A-H2B heterodimers. Interacts with the inner kinetochore. Post-translationally, ubiquitinated. Is degraded through ubiquitin-mediated proteolysis when not protected by its association to the kinetochore.

Its subcellular location is the nucleus. The protein localises to the chromosome. It is found in the centromere. Histone H3-like nucleosomal protein that is specifically found in centromeric nucleosomes. Replaces conventional H3 in the nucleosome core of centromeric chromatin that serves as an assembly site for the inner kinetochore. Required for recruitment and assembly of kinetochore proteins, mitotic progression and chromosome segregation. May serve as an epigenetic mark that propagates centromere identity through replication and cell division. The sequence is that of Histone H3-like centromeric protein CSE4 (CSE4) from Millerozyma farinosa (Yeast).